Consider the following 497-residue polypeptide: Probable cytosol aminopeptidase (497 aa).

Residues lysine 267 and aspartate 272 each contribute to the Mn(2+) site. Lysine 279 is a catalytic residue. Mn(2+) is bound by residues aspartate 290, aspartate 349, and glutamate 351. Arginine 353 is an active-site residue.

This sequence belongs to the peptidase M17 family. Requires Mn(2+) as cofactor.

It localises to the cytoplasm. It carries out the reaction Release of an N-terminal amino acid, Xaa-|-Yaa-, in which Xaa is preferably Leu, but may be other amino acids including Pro although not Arg or Lys, and Yaa may be Pro. Amino acid amides and methyl esters are also readily hydrolyzed, but rates on arylamides are exceedingly low.. It catalyses the reaction Release of an N-terminal amino acid, preferentially leucine, but not glutamic or aspartic acids.. Functionally, presumably involved in the processing and regular turnover of intracellular proteins. Catalyzes the removal of unsubstituted N-terminal amino acids from various peptides. The chain is Probable cytosol aminopeptidase from Pseudomonas entomophila (strain L48).